The chain runs to 352 residues: Dead end protein homolog 1 (352 aa).

RRM domains lie at 58–136 (SEVY…RSTE) and 138–218 (CELT…WLKP). Residue R336 is modified to Omega-N-methylarginine.

Interacts with APOBEC3. Isoform 1 and isoform 2 are expressed in testis. Isoform 1 is expressed continuously in post natal (PN) testis although levels are low between PN1 to PN6. Isoform 2 is expressed from PN 20 onwards. Isoform 2 is strongly expressed in meiotic and in post-meiotic germ cells of the testis with highest expression at the elongated spermatid stage (at protein level). Expressed in testis and heart. Expressed in germ cells and genital ridges. Not detected in testicular tumors.

The protein localises to the nucleus. The protein resides in the cytoplasm. RNA-binding factor that positively regulates gene expression by prohibiting miRNA-mediated gene suppression. Relieves miRNA repression in germline cells. Prohibits the function of several miRNAs by blocking the accessibility of target mRNAs. Sequence-specific RNA-binding factor that binds specifically to U-rich regions (URRs) in the 3' untranslated region (3'-UTR) of several mRNAs. Does not bind to miRNAs. Isoform 1 may play a role during primordial germ cell (PGC) survival. However, does not seem to be essential for PGC migration. The polypeptide is Dead end protein homolog 1 (Dnd1) (Mus musculus (Mouse)).